The primary structure comprises 122 residues: MARIAGVDLPNKKRMEYALTYIYGIGLHNSRLILNAVGIDFNKRAFELTEDEAAAIRKEIQENYMVEGDLRKKVAMDIKSLMDLGSYRGLRHRKGLPCRGQKTKTNARTRKGKKKTVGAATK.

Positions 95-116 are enriched in basic residues; it reads GLPCRGQKTKTNARTRKGKKKT. A disordered region spans residues 95 to 122; the sequence is GLPCRGQKTKTNARTRKGKKKTVGAATK.

It belongs to the universal ribosomal protein uS13 family. Part of the 30S ribosomal subunit. Forms a loose heterodimer with protein S19. Forms two bridges to the 50S subunit in the 70S ribosome.

Functionally, located at the top of the head of the 30S subunit, it contacts several helices of the 16S rRNA. In the 70S ribosome it contacts the 23S rRNA (bridge B1a) and protein L5 of the 50S subunit (bridge B1b), connecting the 2 subunits; these bridges are implicated in subunit movement. Contacts the tRNAs in the A and P-sites. The sequence is that of Small ribosomal subunit protein uS13 from Aliarcobacter butzleri (strain RM4018) (Arcobacter butzleri).